A 257-amino-acid chain; its full sequence is Phosphate import ATP-binding protein PstB (257 aa).

An ABC transporter domain is found at 11–252; sequence IQVRDLNFYY…PAKKQTEDYI (242 aa). Position 43–50 (43–50) interacts with ATP; that stretch reads GPSGCGKS.

This sequence belongs to the ABC transporter superfamily. Phosphate importer (TC 3.A.1.7) family. In terms of assembly, the complex is composed of two ATP-binding proteins (PstB), two transmembrane proteins (PstC and PstA) and a solute-binding protein (PstS).

The protein resides in the cell inner membrane. The catalysed reaction is phosphate(out) + ATP + H2O = ADP + 2 phosphate(in) + H(+). Functionally, part of the ABC transporter complex PstSACB involved in phosphate import. Responsible for energy coupling to the transport system. The polypeptide is Phosphate import ATP-binding protein PstB (Enterobacter cloacae).